A 332-amino-acid chain; its full sequence is Ubiquinone biosynthesis protein COQ4, mitochondrial (332 aa).

Residues 1-16 (MFTVSKKSLQASRNAF) constitute a mitochondrion transit peptide. His-212, Asp-213, His-216, and Glu-228 together coordinate Zn(2+).

Belongs to the COQ4 family. Component of a multi-subunit COQ enzyme complex, composed of at least COQ3, COQ4, COQ5, COQ6, COQ7 and COQ9. Requires Zn(2+) as cofactor.

The protein localises to the mitochondrion inner membrane. The catalysed reaction is a 4-hydroxy-3-methoxy-5-(all-trans-polyprenyl)benzoate + H(+) = a 2-methoxy-6-(all-trans-polyprenyl)phenol + CO2. It participates in cofactor biosynthesis; ubiquinone biosynthesis. In terms of biological role, lyase that catalyzes the C1-decarboxylation of 4-hydroxy-3-methoxy-5-(all-trans-polyprenyl)benzoic acid into 2-methoxy-6-(all-trans-polyprenyl)phenol during ubiquinone biosynthesis. This Kluyveromyces lactis (strain ATCC 8585 / CBS 2359 / DSM 70799 / NBRC 1267 / NRRL Y-1140 / WM37) (Yeast) protein is Ubiquinone biosynthesis protein COQ4, mitochondrial.